The sequence spans 246 residues: UPF0309 protein TTE0306 (246 aa).

The region spanning 31–212 is the SIS domain; it reads ITESLISEDS…EAEIITNMLE (182 aa).

It belongs to the UPF0309 family.

The chain is UPF0309 protein TTE0306 from Caldanaerobacter subterraneus subsp. tengcongensis (strain DSM 15242 / JCM 11007 / NBRC 100824 / MB4) (Thermoanaerobacter tengcongensis).